The chain runs to 543 residues: Chaperonin GroEL 7 (543 aa).

Residues 30 to 33, K51, 87 to 91, G415, and D496 each bind ATP; these read TLGP and DGTTT.

It belongs to the chaperonin (HSP60) family. In terms of assembly, forms a cylinder of 14 subunits composed of two heptameric rings stacked back-to-back. Interacts with the co-chaperonin GroES.

The protein localises to the cytoplasm. It carries out the reaction ATP + H2O + a folded polypeptide = ADP + phosphate + an unfolded polypeptide.. In terms of biological role, together with its co-chaperonin GroES, plays an essential role in assisting protein folding. The GroEL-GroES system forms a nano-cage that allows encapsulation of the non-native substrate proteins and provides a physical environment optimized to promote and accelerate protein folding. In Bradyrhizobium diazoefficiens (strain JCM 10833 / BCRC 13528 / IAM 13628 / NBRC 14792 / USDA 110), this protein is Chaperonin GroEL 7.